Consider the following 640-residue polypeptide: Threonine--tRNA ligase (640 aa).

A TGS domain is found at 1–60; the sequence is MKITFPDGAVKEFEPGVSTADIAASISPGLKKKALAGKLNGELLDLVTPIHEDGAIEIVT. The segment at 241–538 is catalytic; sequence DHRKLGKELE…LIEEYKGAFP (298 aa). The Zn(2+) site is built by C334, H385, and H515.

Belongs to the class-II aminoacyl-tRNA synthetase family. In terms of assembly, homodimer. Zn(2+) serves as cofactor.

It localises to the cytoplasm. The catalysed reaction is tRNA(Thr) + L-threonine + ATP = L-threonyl-tRNA(Thr) + AMP + diphosphate + H(+). In terms of biological role, catalyzes the attachment of threonine to tRNA(Thr) in a two-step reaction: L-threonine is first activated by ATP to form Thr-AMP and then transferred to the acceptor end of tRNA(Thr). Also edits incorrectly charged L-seryl-tRNA(Thr). The protein is Threonine--tRNA ligase of Listeria welshimeri serovar 6b (strain ATCC 35897 / DSM 20650 / CCUG 15529 / CIP 8149 / NCTC 11857 / SLCC 5334 / V8).